We begin with the raw amino-acid sequence, 333 residues long: Anthranilate phosphoribosyltransferase (333 aa).

Residues Gly80, Gly83–Asp84, Ser88, Asn90–Thr93, Lys108–Ser116, and Ser120 each bind 5-phospho-alpha-D-ribose 1-diphosphate. Residue Gly80 coordinates anthranilate. Ser92 serves as a coordination point for Mg(2+). Asn111 serves as a coordination point for anthranilate. Arg166 contributes to the anthranilate binding site. Mg(2+) contacts are provided by Asp224 and Glu225.

Belongs to the anthranilate phosphoribosyltransferase family. Homodimer. It depends on Mg(2+) as a cofactor.

The enzyme catalyses N-(5-phospho-beta-D-ribosyl)anthranilate + diphosphate = 5-phospho-alpha-D-ribose 1-diphosphate + anthranilate. Its pathway is amino-acid biosynthesis; L-tryptophan biosynthesis; L-tryptophan from chorismate: step 2/5. In terms of biological role, catalyzes the transfer of the phosphoribosyl group of 5-phosphorylribose-1-pyrophosphate (PRPP) to anthranilate to yield N-(5'-phosphoribosyl)-anthranilate (PRA). The sequence is that of Anthranilate phosphoribosyltransferase from Yersinia pseudotuberculosis serotype O:1b (strain IP 31758).